A 585-amino-acid chain; its full sequence is Arginine--tRNA ligase (585 aa).

The short motif at 131–141 (ANPTGPMHVGH) is the 'HIGH' region element.

Belongs to the class-I aminoacyl-tRNA synthetase family. As to quaternary structure, monomer.

The protein resides in the cytoplasm. The enzyme catalyses tRNA(Arg) + L-arginine + ATP = L-arginyl-tRNA(Arg) + AMP + diphosphate. In Bartonella henselae (strain ATCC 49882 / DSM 28221 / CCUG 30454 / Houston 1) (Rochalimaea henselae), this protein is Arginine--tRNA ligase.